The following is a 382-amino-acid chain: ATP phosphoribosyltransferase regulatory subunit (382 aa).

Belongs to the class-II aminoacyl-tRNA synthetase family. HisZ subfamily. In terms of assembly, heteromultimer composed of HisG and HisZ subunits.

The protein resides in the cytoplasm. Its pathway is amino-acid biosynthesis; L-histidine biosynthesis; L-histidine from 5-phospho-alpha-D-ribose 1-diphosphate: step 1/9. Required for the first step of histidine biosynthesis. May allow the feedback regulation of ATP phosphoribosyltransferase activity by histidine. The sequence is that of ATP phosphoribosyltransferase regulatory subunit from Burkholderia pseudomallei (strain K96243).